The chain runs to 480 residues: Coronin-2B (480 aa).

7 WD repeats span residues 29-77, 78-127, 128-170, 171-212, 213-259, 260-305, and 306-345; these read HCFD…GRIE, PNYP…RNMT, EALL…LDVG, EPVK…PRSG, RVLQ…EDLS, MPLI…TEKP, and YLSYLMEFRSPAPQKGLGVMPKHGLDVSACEVFRFYKLVT. A coiled-coil region spans residues 436–479; it reads NELLRMFFRQQDEIRRLKEELAQKDIRIRQLQLELKNLRNSPKN.

This sequence belongs to the WD repeat coronin family. In terms of assembly, binds to F-actin and to vinculin. In terms of tissue distribution, expressed predominantly in brain.

It is found in the cytoplasm. Its subcellular location is the cytoskeleton. May play a role in the reorganization of neuronal actin structure. This Homo sapiens (Human) protein is Coronin-2B (CORO2B).